A 187-amino-acid chain; its full sequence is UPF0302 protein SERP1032 (187 aa).

Belongs to the UPF0302 family.

This is UPF0302 protein SERP1032 from Staphylococcus epidermidis (strain ATCC 35984 / DSM 28319 / BCRC 17069 / CCUG 31568 / BM 3577 / RP62A).